Reading from the N-terminus, the 260-residue chain is tRNA pseudouridine synthase C (260 aa).

D54 is a catalytic residue.

It belongs to the pseudouridine synthase RluA family.

It catalyses the reaction uridine(65) in tRNA = pseudouridine(65) in tRNA. In terms of biological role, responsible for synthesis of pseudouridine from uracil-65 in transfer RNAs. This is tRNA pseudouridine synthase C (truC) from Escherichia coli (strain K12).